A 458-amino-acid chain; its full sequence is ATP synthase subunit beta (458 aa).

148-155 is a binding site for ATP; the sequence is GGAGVGKT.

Belongs to the ATPase alpha/beta chains family. In terms of assembly, F-type ATPases have 2 components, CF(1) - the catalytic core - and CF(0) - the membrane proton channel. CF(1) has five subunits: alpha(3), beta(3), gamma(1), delta(1), epsilon(1). CF(0) has three main subunits: a(1), b(2) and c(9-12). The alpha and beta chains form an alternating ring which encloses part of the gamma chain. CF(1) is attached to CF(0) by a central stalk formed by the gamma and epsilon chains, while a peripheral stalk is formed by the delta and b chains.

The protein resides in the cell inner membrane. It catalyses the reaction ATP + H2O + 4 H(+)(in) = ADP + phosphate + 5 H(+)(out). Produces ATP from ADP in the presence of a proton gradient across the membrane. The catalytic sites are hosted primarily by the beta subunits. The polypeptide is ATP synthase subunit beta (Legionella pneumophila (strain Paris)).